The sequence spans 122 residues: Protein MGF 110-6L (122 aa).

The signal sequence occupies residues 1 to 18; that stretch reads MLVIFLGILGLMASQVLG. Asn100 carries N-linked (GlcNAc...) asparagine; by host glycosylation. Residues 119 to 122 carry the Prevents secretion from ER motif; it reads KDEL.

It belongs to the asfivirus MGF 110 family. Post-translationally, N-glycosylated.

It is found in the host endoplasmic reticulum lumen. Functionally, plays a role in virus cell tropism, and may be required for efficient virus replication in macrophages. This is Protein MGF 110-6L from Ornithodoros (relapsing fever ticks).